The sequence spans 766 residues: Transcription factor GTE4 (766 aa).

Disordered stretches follow at residues 87–108 (GTNS…PGDD), 234–262 (RDTT…PMEE), and 388–412 (GDKL…GDVG). The segment covering 238 to 250 (DAQQPAGLTSDSA) has biased composition (polar residues). The Bromo domain maps to 416–522 (GAGTKVFKNC…QIFEERWAVI (107 aa)). Disordered stretches follow at residues 544–606 (TMRS…NKRD) and 687–766 (ARAE…SDQT). Over residues 574 to 589 (PTTTPGRTPTSATPSG) the composition is skewed to low complexity. One can recognise an NET domain in the interval 597 to 678 (PKANEPNKRD…NYKKGLSKKK (82 aa)). Residues 736–766 (SRSSSSSSSSSSSSSSDSDSDSSSSSGSDQT) show a composition bias toward low complexity.

In terms of tissue distribution, ubiquitously expressed.

It localises to the nucleus. Its function is as follows. Involved in the activation and maintenance of cell division in the meristems and by this controls cell numbers in differentiated organs. Its action in cell cycle regulation may be directed through the RB-E2F pathway. The protein is Transcription factor GTE4 (GTE4) of Arabidopsis thaliana (Mouse-ear cress).